Consider the following 696-residue polypeptide: MAKTNQAITICSLLLLLLLSETTSHLLCSDSKTPVNNNETLQFCDSYKERSCCNSKDDLQLQNRFNSMNISDSNCSSLLKSILCSKCDEFSGQLFGDDDSSLVPILCNSTSQDLCSKLWDSCQNISIVSSPFSPTLLGGATSPSTSSNSSTLTDLWKSQTEFCTAFGGPSQTNNNKTKCFNGEPVNRDTSDDDEDDVKTPKGICLEKIGTGSYLNMVAHPDGSNRAFFSNQPGKIWLGTIPDQDSGKPMEIDESTPFVDITDQVSFDTQFGMMGMAFHPKFAENGRFFASFNCDKVKSPGCSGRCACNSDVNCDPSKLPKDDGTTPCRYQTVVSEYTANGTSSSPSTAKIGKASEVRRIFTMGLPYSSSHGGQILFGPDGYLYLMTGDGGGVSDTHNFAQNKKSLLGKILRLDVDVMPSVSEISKLGLWGNYSIPKNNPFQGNENEQPEIWALGLRNPWRCSFDSERPDYFLCADVGKDTYEEVDIITMGGNYGWRTYEGPYVFSPLSPFGENVSSDSNLTFPILGYNHSEVNKHEGSASIIGGYFYRSNTDPCSYGTYLYADLYANAMWAAIESPEDSGNFTDSLIPFSCSKDSPMKCTAAPGGASSGPALGYIYSFGQDNNKDIHLLTSSGVYRIVRPSRCNLACSKENTTASAGKQNPAGSAPPQPLPSSARKLCFSVFLLLSLLMMFLTLLD.

The first 24 residues, 1 to 24, serve as a signal peptide directing secretion; the sequence is MAKTNQAITICSLLLLLLLSETTS. N-linked (GlcNAc...) asparagine glycans are attached at residues N38, N69, N74, N108, N124, N148, N175, N339, N431, N513, N519, N528, N581, and N651. A lipid anchor (GPI-anchor amidated serine) is attached at S672. A propeptide spans 673–696 (removed in mature form); it reads SARKLCFSVFLLLSLLMMFLTLLD.

Belongs to the PQQ oxidoreductase GdhB family. The cofactor is pyrroloquinoline quinone.

The protein resides in the cell membrane. The chain is HIPL2 protein (HIPL2) from Arabidopsis thaliana (Mouse-ear cress).